The following is a 398-amino-acid chain: Ubiquitin carboxyl-terminal hydrolase 17-like protein 6 (398 aa).

Residues 80 to 375 (AGLQNMGNTC…QAYVLFYIQK (296 aa)) form the USP domain. The active-site Nucleophile is the Cys89. His334 serves as the catalytic Proton acceptor.

Belongs to the peptidase C19 family. USP17 subfamily.

The protein resides in the nucleus. It is found in the cytoplasm. It carries out the reaction Thiol-dependent hydrolysis of ester, thioester, amide, peptide and isopeptide bonds formed by the C-terminal Gly of ubiquitin (a 76-residue protein attached to proteins as an intracellular targeting signal).. In terms of biological role, deubiquitinating enzyme that removes conjugated ubiquitin from specific proteins to regulate different cellular processes that may include cell proliferation, progression through the cell cycle, cell migration, and the cellular response to viral infection. Seems to be non-functional in the regulation of apoptosis. The polypeptide is Ubiquitin carboxyl-terminal hydrolase 17-like protein 6 (USP17L6P) (Homo sapiens (Human)).